A 281-amino-acid chain; its full sequence is sn-glycerol-3-phosphate transport system permease protein UgpE (281 aa).

6 helical membrane passes run 16 to 36 (LILG…AATL), 85 to 105 (FSIT…IVWF), 113 to 133 (FFWM…FPTV), 142 to 162 (LDSY…TFLF), 202 to 222 (ALFV…LLII), and 247 to 267 (WNQV…IVLA). The 192-residue stretch at 77-268 (MLNSFIMAFS…IPPVVIVLAM (192 aa)) folds into the ABC transmembrane type-1 domain.

It belongs to the binding-protein-dependent transport system permease family. UgpAE subfamily. In terms of assembly, the complex is composed of two ATP-binding proteins (UgpC), two transmembrane proteins (UgpA and UgpE) and a solute-binding protein (UgpB).

The protein localises to the cell inner membrane. Functionally, part of the ABC transporter complex UgpBAEC involved in sn-glycerol-3-phosphate (G3P) import. Probably responsible for the translocation of the substrate across the membrane. This Salmonella choleraesuis (strain SC-B67) protein is sn-glycerol-3-phosphate transport system permease protein UgpE (ugpE).